The chain runs to 208 residues: Ribosome maturation factor RimP (208 aa).

Residues 189-208 (EAPETGATTMARDGSEEETK) are disordered.

The protein belongs to the RimP family.

Its subcellular location is the cytoplasm. Functionally, required for maturation of 30S ribosomal subunits. In Ruegeria pomeroyi (strain ATCC 700808 / DSM 15171 / DSS-3) (Silicibacter pomeroyi), this protein is Ribosome maturation factor RimP.